Consider the following 128-residue polypeptide: uncharacterized protein (128 aa).

This is an uncharacterized protein from Archaeoglobus fulgidus (strain ATCC 49558 / DSM 4304 / JCM 9628 / NBRC 100126 / VC-16).